A 558-amino-acid polypeptide reads, in one-letter code: MATLDKFLSIKENDEKTKKKESKKKSSKSNKTSESLVSHDHFELTPEFENQLWKVADKLRKKMEVHQYKYVVLGLIFLRALTCRFYERRKEIEEELSNPNSELYTEDPELRKMILEDEDFYLSEGVLYLPKETRWDYFVENVMSPNIGEIIDTAIEILEEKYPDRLKDVIPKIYAQSPLDNHDYSYLINKFSEISFGKEHRVKDVFGRIYEYFLGKFTEVEGKLGGKFYTPRSLTKLIVDVLDVKGGSIFDPACGSGGFFVSALEKLEREGIDINELSIYGQDSDPMAYRLTKMNLIIRGAEGDIRIDDSYHDDKFMDMTFDYVVANPPFNDSEWDANRIKPDDPRLRIGNKKVPVPPNGNANYMWILHFIYHTAPNGKAGFVMANGALSAGNVEGEIRKAIIENDLVYGIVACPPKLFYNVSLPVSLWFIRKEKPDYMKGKVLFINAKNLYKQISRRQNILTEEHIKKIVDKFRMFESGEDEDKINELGFAKVATIDEIAKNGYVLTPGRYVGVKIEDDGIPFEVKMKEYSEELKKLLDEEEKLRNKVKEILDALGF.

Residues 1–37 (MATLDKFLSIKENDEKTKKKESKKKSSKSNKTSESLV) are disordered. Residues 8 to 18 (LSIKENDEKTK) are compositionally biased toward basic and acidic residues. Residues 19-28 (KKESKKKSSK) are compositionally biased toward basic residues. S-adenosyl-L-methionine contacts are provided by residues 227–232 (KFYTPR), 256–258 (SGG), and Asp-283.

It belongs to the N(4)/N(6)-methyltransferase family. The type I restriction/modification system is composed of three polypeptides R, M and S.

The enzyme catalyses a 2'-deoxyadenosine in DNA + S-adenosyl-L-methionine = an N(6)-methyl-2'-deoxyadenosine in DNA + S-adenosyl-L-homocysteine + H(+). Functionally, the subtype gamma methyltransferase (M) subunit of a type I restriction enzyme. The M and S subunits together form a methyltransferase (MTase) that methylates A-3 on the top and A-2 on the bottom strand of the sequence 5'-CCAN(5)GTR-3'. In the presence of the R subunit the complex can also act as an endonuclease, binding to the same target sequence but cutting the DNA some distance from this site. Whether the DNA is cut or modified depends on the methylation state of the target sequence. When the target site is unmodified, the DNA is cut. When the target site is hemimethylated, the complex acts as a maintenance MTase modifying the DNA so that both strands become methylated. After locating a non-methylated recognition site, the enzyme complex serves as a molecular motor that translocates DNA in an ATP-dependent manner until a collision occurs that triggers cleavage. The protein is Type I restriction enzyme MjaIX methylase subunit of Methanocaldococcus jannaschii (strain ATCC 43067 / DSM 2661 / JAL-1 / JCM 10045 / NBRC 100440) (Methanococcus jannaschii).